The chain runs to 296 residues: GTP-binding protein GEM (296 aa).

2 disordered regions span residues 1–20 (MTLN…PQQQ) and 37–68 (PHQY…SVIS). The span at 57–68 (SWSSDSTDSVIS) shows a compositional bias: low complexity. GTP contacts are provided by residues 82-89 (GEQGVGKS) and 191-194 (NKSD). A calmodulin-binding region spans residues 266–285 (ARRFWGKIVAKNNKNMAFKL).

This sequence belongs to the small GTPase superfamily. RGK family. As to quaternary structure, interacts with calmodulin in a Ca(2+)-dependent manner. Binds ROCK1. In terms of processing, phosphorylated on tyrosine residues.

The protein localises to the cell membrane. Its function is as follows. Could be a regulatory protein, possibly participating in receptor-mediated signal transduction at the plasma membrane. Has guanine nucleotide-binding activity but undetectable intrinsic GTPase activity. This is GTP-binding protein GEM (GEM) from Pongo abelii (Sumatran orangutan).